The chain runs to 228 residues: Phosphoribosylformylglycinamidine synthase subunit PurQ (228 aa).

Residues 3–226 enclose the Glutamine amidotransferase type-1 domain; sequence FAVIVFPGSN…VNYWRETHVV (224 aa). The active-site Nucleophile is the cysteine 86. Residues histidine 195 and glutamate 197 contribute to the active site.

As to quaternary structure, part of the FGAM synthase complex composed of 1 PurL, 1 PurQ and 2 PurS subunits.

The protein resides in the cytoplasm. The enzyme catalyses N(2)-formyl-N(1)-(5-phospho-beta-D-ribosyl)glycinamide + L-glutamine + ATP + H2O = 2-formamido-N(1)-(5-O-phospho-beta-D-ribosyl)acetamidine + L-glutamate + ADP + phosphate + H(+). The catalysed reaction is L-glutamine + H2O = L-glutamate + NH4(+). It functions in the pathway purine metabolism; IMP biosynthesis via de novo pathway; 5-amino-1-(5-phospho-D-ribosyl)imidazole from N(2)-formyl-N(1)-(5-phospho-D-ribosyl)glycinamide: step 1/2. Functionally, part of the phosphoribosylformylglycinamidine synthase complex involved in the purines biosynthetic pathway. Catalyzes the ATP-dependent conversion of formylglycinamide ribonucleotide (FGAR) and glutamine to yield formylglycinamidine ribonucleotide (FGAM) and glutamate. The FGAM synthase complex is composed of three subunits. PurQ produces an ammonia molecule by converting glutamine to glutamate. PurL transfers the ammonia molecule to FGAR to form FGAM in an ATP-dependent manner. PurS interacts with PurQ and PurL and is thought to assist in the transfer of the ammonia molecule from PurQ to PurL. This chain is Phosphoribosylformylglycinamidine synthase subunit PurQ, found in Geobacillus thermodenitrificans (strain NG80-2).